The primary structure comprises 250 residues: Large ribosomal subunit protein uL29m (250 aa).

The residue at position 144 (K144) is an N6-acetyllysine.

This sequence belongs to the universal ribosomal protein uL29 family. In terms of assembly, component of the mitochondrial large ribosomal subunit (mt-LSU). Mature mammalian 55S mitochondrial ribosomes consist of a small (28S) and a large (39S) subunit. The 28S small subunit contains a 12S ribosomal RNA (12S mt-rRNA) and 30 different proteins. The 39S large subunit contains a 16S rRNA (16S mt-rRNA), a copy of mitochondrial valine transfer RNA (mt-tRNA(Val)), which plays an integral structural role, and 52 different proteins.

Its subcellular location is the mitochondrion. The polypeptide is Large ribosomal subunit protein uL29m (MRPL47) (Homo sapiens (Human)).